The sequence spans 158 residues: Small ribosomal subunit protein uS15 (158 aa).

Residues 1–18 are compositionally biased toward basic residues; that stretch reads MARMHARKRGKSGSKRPP. The segment at 1 to 21 is disordered; the sequence is MARMHARKRGKSGSKRPPRTA.

The protein belongs to the universal ribosomal protein uS15 family. In terms of assembly, part of the 30S ribosomal subunit.

The polypeptide is Small ribosomal subunit protein uS15 (Pyrococcus horikoshii (strain ATCC 700860 / DSM 12428 / JCM 9974 / NBRC 100139 / OT-3)).